The primary structure comprises 193 residues: MESLRQKVKEDGVVIDEKILKVDGFLNHQIDAKLMHEVGKTFYEQFKDKGVTKILTIEASGIAPAIMASLHFDVPCLFAKKAKPSTLKDGFYSTDIHSFTKNKTSTVIVSEEFLNENDTVLIIDDFLANGDASLGLYDIAQQAKAKTVGIGIVVEKSFQDGRQRLEEAGLNVSSLCKVASLKGNQVTLLGENE.

2 residues coordinate xanthine: leucine 20 and asparagine 27. 5-phospho-alpha-D-ribose 1-diphosphate is bound at residue 128-132 (ANGDA). Lysine 156 contributes to the xanthine binding site.

This sequence belongs to the purine/pyrimidine phosphoribosyltransferase family. Xpt subfamily. As to quaternary structure, homodimer.

It is found in the cytoplasm. The enzyme catalyses XMP + diphosphate = xanthine + 5-phospho-alpha-D-ribose 1-diphosphate. The protein operates within purine metabolism; XMP biosynthesis via salvage pathway; XMP from xanthine: step 1/1. Converts the preformed base xanthine, a product of nucleic acid breakdown, to xanthosine 5'-monophosphate (XMP), so it can be reused for RNA or DNA synthesis. This Staphylococcus haemolyticus (strain JCSC1435) protein is Xanthine phosphoribosyltransferase.